Reading from the N-terminus, the 112-residue chain is Nitrogenase-stabilizing/protective protein NifW (112 aa).

It belongs to the NifW family. In terms of assembly, homotrimer; associates with NifD.

Its function is as follows. May protect the nitrogenase Fe-Mo protein from oxidative damage. The polypeptide is Nitrogenase-stabilizing/protective protein NifW (Paraburkholderia xenovorans (strain LB400)).